The following is a 97-amino-acid chain: Glutamyl-tRNA(Gln) amidotransferase subunit C 2 (97 aa).

This sequence belongs to the GatC family. Heterotrimer of A, B and C subunits.

The enzyme catalyses L-glutamyl-tRNA(Gln) + L-glutamine + ATP + H2O = L-glutaminyl-tRNA(Gln) + L-glutamate + ADP + phosphate + H(+). The catalysed reaction is L-aspartyl-tRNA(Asn) + L-glutamine + ATP + H2O = L-asparaginyl-tRNA(Asn) + L-glutamate + ADP + phosphate + 2 H(+). Its function is as follows. Allows the formation of correctly charged Asn-tRNA(Asn) or Gln-tRNA(Gln) through the transamidation of misacylated Asp-tRNA(Asn) or Glu-tRNA(Gln) in organisms which lack either or both of asparaginyl-tRNA or glutaminyl-tRNA synthetases. The reaction takes place in the presence of glutamine and ATP through an activated phospho-Asp-tRNA(Asn) or phospho-Glu-tRNA(Gln). The chain is Glutamyl-tRNA(Gln) amidotransferase subunit C 2 (gatC2) from Clostridium acetobutylicum (strain ATCC 824 / DSM 792 / JCM 1419 / IAM 19013 / LMG 5710 / NBRC 13948 / NRRL B-527 / VKM B-1787 / 2291 / W).